Here is a 548-residue protein sequence, read N- to C-terminus: MSSPPLHGLSSGGHLSRDPPPRSWSPRDKCSYLGLSHGNLRVHYKGHGKTSKDAASVRSTHPIPAACGIFYFEVKIISKGRDGYMGIGLSTQGVNLSRLPGWDKHSYGYHGDDGHSFCSSGTGQPYGPTFTTGDVIGCCVNLIDNTCFYTKNGHSLGIAFTDLPPNLYPTVGLQTPGEVVDANFGQSPFVFDIEDYIREWRTKIQAQIERFPVGGEWQSMIQRMVSSYLVHHGYCSTAEAFAKSTDQTVQEELASIKNRQRIQKLVLSGRMGEAIETTQQLYPSLLERNPNLLFTLKVRQFIEMVNGTDSEVRCLGNRSLKSLDGCSGSDSNCSNGIISNKAHQTHCHSKSQSSNLNVTELNSINMTMSHQLNSYSSNDVEMETDHYSNGFSASTSNGFLNGSSRHEPELEECDTEMEVDTSHGRRQLCGGSQAAVERMICFGRELQAMSEQLRRERGKNATNKNMLKDAFSLLAYSDPWNSPVGYQLDPIQREHVCSSLNSAILDIHNLPKQPPLSLALEQASQCLEMMAQCGIGSCAFARVADYLH.

Over residues 1–14 (MSSPPLHGLSSGGH) the composition is skewed to low complexity. The interval 1–26 (MSSPPLHGLSSGGHLSRDPPPRSWSP) is disordered. The 188-residue stretch at 2-189 (SSPPLHGLSS…VDANFGQSPF (188 aa)) folds into the B30.2/SPRY domain. Residues 15–26 (LSRDPPPRSWSP) show a composition bias toward basic and acidic residues. Residues 217-249 (WQSMIQRMVSSYLVHHGYCSTAEAFAKSTDQTV) form the LisH domain. The 58-residue stretch at 255 to 312 (SIKNRQRIQKLVLSGRMGEAIETTQQLYPSLLERNPNLLFTLKVRQFIEMVNGTDSEV) folds into the CTLH domain.

It belongs to the RANBP9/10 family. As to quaternary structure, identified in the CTLH complex that contains at least MAEA, RMND5A (or alternatively its paralog RMND5B), GID8, WDR26, and RANBP9 and/or RANBP10.

Its subcellular location is the cytoplasm. It is found in the cell membrane. It localises to the nucleus. Functionally, may act as scaffolding protein, and as adapter protein to couple membrane receptors to intracellular signaling pathways. Acts as a mediator of cell spreading and actin cytoskeleton rearrangement. Core component of the CTLH E3 ubiquitin-protein ligase complex that mediates ubiquitination and subsequent proteasomal degradation of target proteins. This chain is Ran-binding protein 9 (ranbp9), found in Xenopus tropicalis (Western clawed frog).